A 584-amino-acid polypeptide reads, in one-letter code: Proline--tRNA ligase (584 aa).

The segment at 242 to 261 (APPASNPEERPATQVHDTPD) is disordered.

The protein belongs to the class-II aminoacyl-tRNA synthetase family. ProS type 1 subfamily. In terms of assembly, homodimer.

It is found in the cytoplasm. The enzyme catalyses tRNA(Pro) + L-proline + ATP = L-prolyl-tRNA(Pro) + AMP + diphosphate. Catalyzes the attachment of proline to tRNA(Pro) in a two-step reaction: proline is first activated by ATP to form Pro-AMP and then transferred to the acceptor end of tRNA(Pro). As ProRS can inadvertently accommodate and process non-cognate amino acids such as alanine and cysteine, to avoid such errors it has two additional distinct editing activities against alanine. One activity is designated as 'pretransfer' editing and involves the tRNA(Pro)-independent hydrolysis of activated Ala-AMP. The other activity is designated 'posttransfer' editing and involves deacylation of mischarged Ala-tRNA(Pro). The misacylated Cys-tRNA(Pro) is not edited by ProRS. The sequence is that of Proline--tRNA ligase from Salinispora arenicola (strain CNS-205).